The following is a 329-amino-acid chain: GTP 3',8-cyclase (329 aa).

The region spanning 1–229 (MNQIDYLRIS…EGQVRGNGPA (229 aa)) is the Radical SAM core domain. Arginine 8 contacts GTP. 2 residues coordinate [4Fe-4S] cluster: cysteine 15 and cysteine 19. Position 21 (tyrosine 21) interacts with S-adenosyl-L-methionine. [4Fe-4S] cluster is bound at residue cysteine 22. Arginine 60 lines the GTP pocket. Glycine 64 contributes to the S-adenosyl-L-methionine binding site. Threonine 91 lines the GTP pocket. Serine 115 is a binding site for S-adenosyl-L-methionine. Lysine 155 lines the GTP pocket. Methionine 189 contacts S-adenosyl-L-methionine. [4Fe-4S] cluster is bound by residues cysteine 252 and cysteine 255. A GTP-binding site is contributed by 257–259 (RLR). Position 269 (cysteine 269) interacts with [4Fe-4S] cluster.

It belongs to the radical SAM superfamily. MoaA family. In terms of assembly, monomer and homodimer. It depends on [4Fe-4S] cluster as a cofactor.

It carries out the reaction GTP + AH2 + S-adenosyl-L-methionine = (8S)-3',8-cyclo-7,8-dihydroguanosine 5'-triphosphate + 5'-deoxyadenosine + L-methionine + A + H(+). Its pathway is cofactor biosynthesis; molybdopterin biosynthesis. In terms of biological role, catalyzes the cyclization of GTP to (8S)-3',8-cyclo-7,8-dihydroguanosine 5'-triphosphate. This Microcystis aeruginosa (strain NIES-843 / IAM M-2473) protein is GTP 3',8-cyclase.